Reading from the N-terminus, the 44-residue chain is Photosystem I reaction center subunit IX (44 aa).

A helical transmembrane segment spans residues 7-27 (YLSTAPVLAILCVSFLAALLI).

It belongs to the PsaJ family.

The protein localises to the plastid. The protein resides in the chloroplast thylakoid membrane. Its function is as follows. May help in the organization of the PsaE and PsaF subunits. In Pinus thunbergii (Japanese black pine), this protein is Photosystem I reaction center subunit IX.